The primary structure comprises 331 residues: GTPase Obg (331 aa).

The Obg domain maps to 1-159 (MQFIDQARIA…RELQLELKLL (159 aa)). The OBG-type G domain maps to 160–328 (AEVGLVGLPN…LLQQVWQELG (169 aa)). GTP contacts are provided by residues 166–173 (GLPNAGKS), 191–195 (FTTLV), 213–216 (DIPG), 280–283 (SKSE), and 309–311 (SAV). Serine 173 and threonine 193 together coordinate Mg(2+).

Belongs to the TRAFAC class OBG-HflX-like GTPase superfamily. OBG GTPase family. Monomer. Mg(2+) is required as a cofactor.

The protein resides in the cytoplasm. In terms of biological role, an essential GTPase which binds GTP, GDP and possibly (p)ppGpp with moderate affinity, with high nucleotide exchange rates and a fairly low GTP hydrolysis rate. Plays a role in control of the cell cycle, stress response, ribosome biogenesis and in those bacteria that undergo differentiation, in morphogenesis control. The protein is GTPase Obg of Synechococcus sp. (strain RCC307).